The sequence spans 466 residues: Gamma-aminobutyric acid permease (466 aa).

The Cytoplasmic portion of the chain corresponds to 2–20 (GQSSQPHELGGGLKSRHVT). The next 2 membrane-spanning stretches (helical) occupy residues 21–41 (MLSIAGVIGASLFVGSSVAIA) and 42–62 (EAGPAVLLAYLFAGLLVVMIM). At 63 to 96 (RMLAEMAVATPDTGSFSTYADKAIGRWAGYTIGW) the chain is on the cytoplasmic side. The helical transmembrane segment at 97 to 117 (LYWWFWVLVIPLEANIAAMIL) threads the bilayer. His-118 is a topological domain (periplasmic). Residues 119–139 (SWVPGIPIWLFSLVITLALTG) form a helical membrane-spanning segment. The Cytoplasmic segment spans residues 140-153 (SNLLSVKNYGEFEF). The chain crosses the membrane as a helical span at residues 154–174 (WLALCKVIAILAFIFLGAVAI). At 175 to 199 (SGFYPYAEVSGISRLWDSGGFMPNG) the chain is on the periplasmic side. A helical membrane pass occupies residues 200–220 (FGAVLSAMLITMFSFMGAEIV). The Cytoplasmic segment spans residues 221 to 246 (TIAAAESDTPEKHIVRATNSVIWRIS). Residues 247–267 (IFYLCSIFVVVALIPWNMPGL) traverse the membrane as a helical segment. The Periplasmic segment spans residues 268-286 (KAVGSYRSVLELLNIPHAK). The chain crosses the membrane as a helical span at residues 287–307 (LIMDCVILLSVTSCLNSALYT). At 308 to 334 (ASRMLYSLSRRGDAPAVMGKINRSKTP) the chain is on the cytoplasmic side. Residues 335-355 (YVAVLLSTGAAFLTVVVNYYA) form a helical membrane-spanning segment. Residues 356-358 (PAK) lie on the Periplasmic side of the membrane. A helical membrane pass occupies residues 359 to 379 (VFKFLIDSSGAIALLVYLVIA). Residues 380–402 (VSQLRMRKILRAEGSEIRLRMWL) are Cytoplasmic-facing. Residues 403-423 (YPWLTWLVIGFITFVLVVMLF) traverse the membrane as a helical segment. Residues 424–428 (RPAQQ) are Periplasmic-facing. Residues 429-449 (LEVISTGLLAIGIICTVPIMA) traverse the membrane as a helical segment. The Cytoplasmic portion of the chain corresponds to 450–466 (RWKKLVLWQKTPVHNTR).

It belongs to the amino acid-polyamine-organocation (APC) superfamily. Amino acid transporter (AAT) (TC 2.A.3.1) family. In terms of assembly, monomer.

The protein resides in the cell inner membrane. It catalyses the reaction 4-aminobutanoate(in) + H(+)(in) = 4-aminobutanoate(out) + H(+)(out). Its pathway is amino-acid degradation; 4-aminobutanoate degradation. Uptake is stimulated by ammonium sulfate and abolished by 2,4-dinitrophenol. Is affected both topologically and kinetically by phospholipid composition of the membrane. In cells lacking phosphatidylethanolamine (PE), the N-terminal hairpin is inverted relative to the membrane and the rate of GABA transport is reduced by more than 99%. In terms of biological role, transporter for gamma-aminobutyrate (GABA). Transport is driven by the membrane potential. Can also transport a number of GABA analogs such as nipecotic acid or muscimol. The sequence is that of Gamma-aminobutyric acid permease from Escherichia coli (strain K12).